Reading from the N-terminus, the 461-residue chain is L-seryl-tRNA(Sec) selenium transferase (461 aa).

Residue K294 is modified to N6-(pyridoxal phosphate)lysine.

Belongs to the SelA family. Pyridoxal 5'-phosphate serves as cofactor.

The protein localises to the cytoplasm. It carries out the reaction L-seryl-tRNA(Sec) + selenophosphate + H(+) = L-selenocysteinyl-tRNA(Sec) + phosphate. It functions in the pathway aminoacyl-tRNA biosynthesis; selenocysteinyl-tRNA(Sec) biosynthesis; selenocysteinyl-tRNA(Sec) from L-seryl-tRNA(Sec) (bacterial route): step 1/1. In terms of biological role, converts seryl-tRNA(Sec) to selenocysteinyl-tRNA(Sec) required for selenoprotein biosynthesis. The protein is L-seryl-tRNA(Sec) selenium transferase of Haemophilus influenzae (strain 86-028NP).